The chain runs to 356 residues: Heparan sulfate 2-O-sulfotransferase 1 (356 aa).

Topologically, residues 1–11 are cytoplasmic; it reads MGLLRIMMPPK. A helical; Signal-anchor for type II membrane protein transmembrane segment spans residues 12–28; that stretch reads LQLLAVLTFGVLMLFLE. Positions 24–51 form a coiled coil; it reads MLFLENQIQNLEESREKLERAIARHEVR. Over 29-356 the chain is Lumenal; it reads NQIQNLEESR…FYEKIYPKSN (328 aa). Residues lysine 83, threonine 84, alanine 85, serine 86, threonine 87, and serine 88 each coordinate adenosine 3',5'-bisphosphate. Residues asparagine 108 and asparagine 127 are each glycosylated (N-linked (GlcNAc...) asparagine). Residues histidine 140 and histidine 142 contribute to the active site. Positions 164 and 172 each coordinate adenosine 3',5'-bisphosphate. 2 cysteine pairs are disulfide-bonded: cysteine 201-cysteine 209 and cysteine 222-cysteine 228. Adenosine 3',5'-bisphosphate-binding residues include tyrosine 279, serine 285, threonine 290, and lysine 293.

This sequence belongs to the sulfotransferase 3 family. As to quaternary structure, homotrimer.

Its subcellular location is the golgi apparatus membrane. Functionally, catalyzes the transfer of a sulfo group from 3'-phospho-5'-adenylyl sulfate (PAPS) to the 2-OH position of iduronic acid (IdoA) or glucuronic acid (GlcA) within the heparan sulfate (HS) chain and participates in HS biosynthesis. The sequence is that of Heparan sulfate 2-O-sulfotransferase 1 from Xenopus laevis (African clawed frog).